A 1588-amino-acid polypeptide reads, in one-letter code: Autotransporter adhesin EhaG (1588 aa).

The first 53 residues, 1 to 53, serve as a signal peptide directing secretion; the sequence is MNKIFKVIWNPATGNYTVTSETAKSRGKKSGRSKLLISALVAGGMLSSFGALA. The surface exposed passenger domain stretch occupies residues 54–1499; it reads NAGNDNGQGV…QETKQYTDQR (1446 aa). The interval 1500–1588 is translocator domain; the sequence is MVEMDNKLSK…SAALGAGIQW (89 aa). The next 4 beta stranded transmembrane spans lie at 1534-1544, 1548-1558, 1567-1573, and 1577-1588; these read GASMASIGGGT, ESAVALGVSMV, KLQGSTN, and EYSAALGAGIQW.

The protein belongs to the autotransporter-2 (AT-2) (TC 1.B.40) family. Homotrimer.

The protein resides in the cell surface. The protein localises to the cell outer membrane. Functionally, mediates aggregation, biofilm formation and adhesion to a range of extracellular matrix (ECM) proteins, such as fibronectin, fibrinogen, laminin and collagen types I, II, III, and V. Mediates adhesion to intestinal epithelial cells. In Escherichia coli O157:H7, this protein is Autotransporter adhesin EhaG.